The sequence spans 709 residues: MWWGGRGQSFNIAPQKEEPEMGSVQENRMPEPRSRQPSSCLASRCLPGEQILAWAPGVRKGLEPELSGTLICTNFRVTFQPCGWQWNQDTPLNSEYDFALVNIGRLEAVSGLSRVQLLRPGSLHKFIPEEILIHGRDFRLLRVGFEAGGLEPQAFQVTMAIVQARAQSNQAQQYSGITLSKAGQGSGSRKPPIPLMETAEDWETERKKQAARGWRVSTVNERFDVATSLPRYFWVPNRILDSEVRRAFGHFHQGRGPRLSWHHPGGSDLLRCGGFYTASDPNKEDIRAVELMLQAGHSDVVLVDTMDELPSLADVQLAHLRLRALCLPDSSVAEDKWLSALEGTRWLDYVRACLRKASDISVLVTSRVRSVILQERGDRDLNGLLSSLVQLLSAPEARTLFGFQSLVQREWVAAGHPFLTRLGGTGASEEAPVFLLFLDCVWQLLQQFPADFEFSEFFLLALHDSVRVPDTLTFLRNTPWERGKQSGQLNSYTQVYTPGYSQPPAGNSFNLQLSVWDWDLRYSNAQILQFQNPGYDPEHCPDSWLPRPQPSFMVPGPPSSVWLFSRGALTPLNQLCPWRDSPSLLAVSSRWLPRPAISSESLADQEWGLPSHWGACPLPPGLLLPGYLGPQIRLWRRCYLRGRPEVQMGLSAPTISGLQDELSHLQELLRKWTPRISPEDHSKKRDPHTILNPTEIAGILKGRAEGDLG.

The interval 1–39 (MWWGGRGQSFNIAPQKEEPEMGSVQENRMPEPRSRQPSS) is disordered. The Myotubularin phosphatase domain maps to 196–639 (METAEDWETE…PQIRLWRRCY (444 aa)).

It belongs to the protein-tyrosine phosphatase family. Non-receptor class myotubularin subfamily. Expressed in bone marrow, spleen and thymus.

This chain is Myotubularin-related protein 11 (MTMR11), found in Homo sapiens (Human).